The chain runs to 162 residues: Large ribosomal subunit protein bL17 (162 aa).

Positions 126–162 (ATAKKATRTRRSKKSAAATEAPAAPAAETTEEAPKAE) are disordered. Residues 130-139 (KATRTRRSKK) show a composition bias toward basic residues. Low complexity predominate over residues 140–153 (SAAATEAPAAPAAE).

The protein belongs to the bacterial ribosomal protein bL17 family. As to quaternary structure, part of the 50S ribosomal subunit. Contacts protein L32.

The sequence is that of Large ribosomal subunit protein bL17 from Phocaeicola vulgatus (strain ATCC 8482 / DSM 1447 / JCM 5826 / CCUG 4940 / NBRC 14291 / NCTC 11154) (Bacteroides vulgatus).